A 202-amino-acid chain; its full sequence is ATP-dependent dethiobiotin synthetase BioD (202 aa).

12–17 is a binding site for ATP; that stretch reads GIGKTI. Thr16 contacts Mg(2+). Lys32 is a catalytic residue. Residue Ser36 participates in substrate binding. Residues Asp43, 94–97, and 178–180 contribute to the ATP site; these read EGAG and PVV. Mg(2+) contacts are provided by Asp43 and Glu94.

Belongs to the dethiobiotin synthetase family. Homodimer. Mg(2+) serves as cofactor.

Its subcellular location is the cytoplasm. It carries out the reaction (7R,8S)-7,8-diammoniononanoate + CO2 + ATP = (4R,5S)-dethiobiotin + ADP + phosphate + 3 H(+). It functions in the pathway cofactor biosynthesis; biotin biosynthesis; biotin from 7,8-diaminononanoate: step 1/2. Its function is as follows. Catalyzes a mechanistically unusual reaction, the ATP-dependent insertion of CO2 between the N7 and N8 nitrogen atoms of 7,8-diaminopelargonic acid (DAPA, also called 7,8-diammoniononanoate) to form a ureido ring. The sequence is that of ATP-dependent dethiobiotin synthetase BioD from Sphingopyxis alaskensis (strain DSM 13593 / LMG 18877 / RB2256) (Sphingomonas alaskensis).